A 403-amino-acid polypeptide reads, in one-letter code: TPR repeat-containing protein Synpcc7942_0270 (403 aa).

5 TPR repeats span residues A208 to A243, V244 to K282, L283 to A316, T317 to D350, and P351 to P387.

The polypeptide is TPR repeat-containing protein Synpcc7942_0270 (Synechococcus elongatus (strain ATCC 33912 / PCC 7942 / FACHB-805) (Anacystis nidulans R2)).